Consider the following 160-residue polypeptide: MAKLKKHPTGTIAQNKKARHDYFIEHKFEAGLVLSGWEVKSLRATKVQLVDSYVLLKDGEAWLMGCHITPLKTASTHVIADPTRTRKLLLNQRELEKLTSSVQQKGYACVALSIYWKQHLIKCEIALGKGKKEYDKRHTERERDSDRELQRAVRTKGKDD.

The tract at residues 131–160 (KKEYDKRHTERERDSDRELQRAVRTKGKDD) is disordered.

It belongs to the SmpB family.

Its subcellular location is the cytoplasm. Its function is as follows. Required for rescue of stalled ribosomes mediated by trans-translation. Binds to transfer-messenger RNA (tmRNA), required for stable association of tmRNA with ribosomes. tmRNA and SmpB together mimic tRNA shape, replacing the anticodon stem-loop with SmpB. tmRNA is encoded by the ssrA gene; the 2 termini fold to resemble tRNA(Ala) and it encodes a 'tag peptide', a short internal open reading frame. During trans-translation Ala-aminoacylated tmRNA acts like a tRNA, entering the A-site of stalled ribosomes, displacing the stalled mRNA. The ribosome then switches to translate the ORF on the tmRNA; the nascent peptide is terminated with the 'tag peptide' encoded by the tmRNA and targeted for degradation. The ribosome is freed to recommence translation, which seems to be the essential function of trans-translation. The protein is SsrA-binding protein of Pseudomonas syringae pv. tomato (strain ATCC BAA-871 / DC3000).